The chain runs to 1411 residues: Early endosome antigen 1 (1411 aa).

Residues 1-27 (MLRRILQRTPGRVGSQGSDLDSSATPI) are disordered. Residues 15–27 (SQGSDLDSSATPI) show a composition bias toward polar residues. A C2H2-type zinc finger spans residues 41–64 (FICPQCMKSLGSADELFKHYEAVH). Residues Ser-52 and Ser-70 each carry the phosphoserine modification. Residues 74 to 1348 (GESNLALKRD…IKHTQALNRK (1275 aa)) are a coiled coil. A disordered region spans residues 473–501 (VTNSTELQHQLDKTKQQHQEQQALQQSTT). The segment covering 481–490 (HQLDKTKQQH) has biased composition (basic and acidic residues). An FYVE-type zinc finger spans residues 1352–1410 (DNEVQNCMACGKGFSVTVRRHHCRQCGNIFCAECSAKNALTPSSKKPVRVCDACFNDLQ). The Zn(2+) site is built by Cys-1358, Cys-1361, Cys-1374, Cys-1377, Cys-1382, Cys-1385, Cys-1402, and Cys-1405.

As to quaternary structure, homodimer. Binds STX6. Binds RAB5A, RAB5B, RAB5C and RAB22A that have been activated by GTP-binding. Interacts with RAB31. Interacts with ERBB2. Interacts with SAMD9 and SAMD9L. May interact with PLEKHF2.

Its subcellular location is the cytoplasm. The protein resides in the early endosome membrane. In terms of biological role, binds phospholipid vesicles containing phosphatidylinositol 3-phosphate and participates in endosomal trafficking. This is Early endosome antigen 1 (EEA1) from Homo sapiens (Human).